Here is a 1357-residue protein sequence, read N- to C-terminus: DNA-directed RNA polymerase subunit beta (1357 aa).

It belongs to the RNA polymerase beta chain family. In terms of assembly, the RNAP catalytic core consists of 2 alpha, 1 beta, 1 beta' and 1 omega subunit. When a sigma factor is associated with the core the holoenzyme is formed, which can initiate transcription.

The enzyme catalyses RNA(n) + a ribonucleoside 5'-triphosphate = RNA(n+1) + diphosphate. In terms of biological role, DNA-dependent RNA polymerase catalyzes the transcription of DNA into RNA using the four ribonucleoside triphosphates as substrates. The polypeptide is DNA-directed RNA polymerase subunit beta (Pseudomonas aeruginosa (strain LESB58)).